The primary structure comprises 74 residues: Invertase 3 (74 aa).

The first 19 residues, 1 to 19, serve as a signal peptide directing secretion; sequence MLLQAFIFLLAGFAAKISA. An N-linked (GlcNAc...) asparagine glycan is attached at Asn23. Substrate contacts are provided by residues 39–42 and Gln60; that span reads WMND. Residue Asp42 is part of the active site. Asn64 carries N-linked (GlcNAc...) asparagine glycosylation.

Belongs to the glycosyl hydrolase 32 family.

It carries out the reaction Hydrolysis of terminal non-reducing beta-D-fructofuranoside residues in beta-D-fructofuranosides.. In Saccharomyces cerevisiae (Baker's yeast), this protein is Invertase 3 (SUC3).